Consider the following 224-residue polypeptide: UPF0758 protein Pfl01_5539 (224 aa).

The MPN domain maps to 102 to 224 (ALENPQVVRD…PLSMAECGWM (123 aa)). Positions 173, 175, and 186 each coordinate Zn(2+). The JAMM motif signature appears at 173 to 186 (HNHPSGNSDPSQAD).

This sequence belongs to the UPF0758 family.

The sequence is that of UPF0758 protein Pfl01_5539 from Pseudomonas fluorescens (strain Pf0-1).